Reading from the N-terminus, the 355-residue chain is uncharacterized protein (355 aa).

3 helical membrane-spanning segments follow: residues 275 to 295, 301 to 321, and 330 to 350; these read SLIVLQSILAVVFGAGLFVAF, WNSIVALVLSVLVILGLVVGV, and IASTLIAVVVGALITLGPLAL.

The protein to M.tuberculosis Rv0497.

The protein localises to the cell membrane. This is an uncharacterized protein from Mycobacterium leprae (strain TN).